The chain runs to 887 residues: Golgin IMH1 (887 aa).

4 disordered regions span residues 16 to 50, 142 to 214, 240 to 301, and 783 to 822; these read LAKG…EELP, QESL…MKSQ, GASQ…SAGD, and LKMS…SISS. Basic and acidic residues-rich tracts occupy residues 37 to 50 and 145 to 210; these read GRRE…EELP and LEQR…HAAE. Positions 118–241 form a coiled coil; sequence AMLTEEIKRI…YKSTIQELGA (124 aa). A compositionally biased stretch (polar residues) spans 240–254; the sequence is GASQATGEAQPSSEA. Basic residues predominate over residues 258–273; it reads RGKKGKGKRGKGKKRV. Positions 299-788 form a coiled coil; it reads AGDEIIEAIE…LSTQLKMSKD (490 aa). Positions 788–807 are enriched in low complexity; sequence DMSSQSRHSSRSGSLVSPSS. A compositionally biased stretch (polar residues) spans 808–822; it reads DNETGNSPRKISISS. Residues 837-885 form the GRIP domain; sequence EMESNEKLAYIRNVLLGFLEHREQRSQLLPVVSTLLQLSSHDEKRLLTS.

It is found in the cytoplasm. Its subcellular location is the golgi apparatus membrane. Involved in vesicular transport between an endosomal compartment and the Golgi apparatus. The sequence is that of Golgin IMH1 (IMH1) from Eremothecium gossypii (strain ATCC 10895 / CBS 109.51 / FGSC 9923 / NRRL Y-1056) (Yeast).